The following is a 1475-amino-acid chain: Protein STU1 (1475 aa).

Disordered stretches follow at residues 870–913 (REST…EPDL) and 1113–1134 (DGESIEDTSGNTSHGTDENRPA). The segment covering 887-896 (DGAHGGDARD) has biased composition (basic and acidic residues).

It belongs to the CLASP family. In terms of assembly, interacts with microtubules.

Its subcellular location is the cytoplasm. It localises to the cytoskeleton. The protein localises to the nucleus. The protein resides in the spindle. Microtubule binding protein that promotes the stabilization of dynamic microtubules. Required for mitotic spindle formation. This Eremothecium gossypii (strain ATCC 10895 / CBS 109.51 / FGSC 9923 / NRRL Y-1056) (Yeast) protein is Protein STU1 (STU1).